We begin with the raw amino-acid sequence, 719 residues long: Glutamate--tRNA ligase, cytoplasmic (719 aa).

Serine 93 contributes to the ATP binding site. The disordered stretch occupies residues serine 176 to aspartate 205. Residues aspartate 195 to valine 204 show a composition bias toward basic and acidic residues. An L-glutamate-binding site is contributed by arginine 217 to alanine 219. Positions proline 220–histidine 230 match the 'HIGH' region motif. Histidine 227 lines the ATP pocket. Residues tyrosine 393–cysteine 397 and arginine 411 contribute to the L-glutamate site. ATP is bound by residues glutamate 414 and leucine 448 to arginine 452. The short motif at leucine 448–arginine 452 is the 'KMSKS' region element.

The protein belongs to the class-I aminoacyl-tRNA synthetase family. Glutamate--tRNA ligase type 2 subfamily. As to quaternary structure, interacts with GLN2, COL4 and RPP13L4/ZAR1.

It localises to the cytoplasm. The protein resides in the cytosol. It catalyses the reaction tRNA(Glu) + L-glutamate + ATP = L-glutamyl-tRNA(Glu) + AMP + diphosphate. In terms of biological role, catalyzes the attachment of glutamate to tRNA(Glu) in a two-step reaction: glutamate is first activated by ATP to form Glu-AMP and then transferred to the acceptor end of tRNA(Glu). This Arabidopsis thaliana (Mouse-ear cress) protein is Glutamate--tRNA ligase, cytoplasmic.